The chain runs to 616 residues: Chaperone protein HscA homolog (616 aa).

This sequence belongs to the heat shock protein 70 family.

In terms of biological role, chaperone involved in the maturation of iron-sulfur cluster-containing proteins. Has a low intrinsic ATPase activity which is markedly stimulated by HscB. The polypeptide is Chaperone protein HscA homolog (Tolumonas auensis (strain DSM 9187 / NBRC 110442 / TA 4)).